The primary structure comprises 176 residues: Cytochrome b (176 aa).

Transmembrane regions (helical) follow at residues 33–53 (FGSL…FLAM), 77–98 (WMLR…YLHV), and 113–133 (WNVG…GYVL). Residues H83 and H97 each contribute to the heme b site.

The protein belongs to the cytochrome b family. As to quaternary structure, the cytochrome bc1 complex contains 11 subunits: 3 respiratory subunits (MT-CYB, CYC1 and UQCRFS1), 2 core proteins (UQCRC1 and UQCRC2) and 6 low-molecular weight proteins (UQCRH/QCR6, UQCRB/QCR7, UQCRQ/QCR8, UQCR10/QCR9, UQCR11/QCR10 and a cleavage product of UQCRFS1). This cytochrome bc1 complex then forms a dimer. The cofactor is heme b.

It is found in the mitochondrion inner membrane. Functionally, component of the ubiquinol-cytochrome c reductase complex (complex III or cytochrome b-c1 complex) that is part of the mitochondrial respiratory chain. The b-c1 complex mediates electron transfer from ubiquinol to cytochrome c. Contributes to the generation of a proton gradient across the mitochondrial membrane that is then used for ATP synthesis. The sequence is that of Cytochrome b (MT-CYB) from Idionycteris phyllotis (Allen's big-eared bat).